Here is a 237-residue protein sequence, read N- to C-terminus: uncharacterized protein (237 aa).

The region spanning 3–116 is the Response regulatory domain; it reads RILLVEDDER…VVMAKIKSVL (114 aa). At Asp52 the chain carries 4-aspartylphosphate. The ompR/PhoB-type DNA-binding region spans 131–229; the sequence is SRIVELGGLT…IRGQGYQFQV (99 aa).

Phosphorylated by YvcQ.

The protein resides in the cytoplasm. Functionally, member of the two-component regulatory system YvcQ/YvcP. This is an uncharacterized protein from Bacillus subtilis (strain 168).